Reading from the N-terminus, the 375-residue chain is MNSLQVLTKKVLIENKAFSNYHEDDIFILQQLGLWWHNGPIGFCKQCKMVTSGSMSCSDVDSYELDRALVRAVKKNQTDLIKLFVLWGANINYGIICAKTERTKVLCIQLGADPKFLDVGLYNLFVDLIKQQKVLLAIDIYYDNISILDRFDSHDFYVLIDFIYNCFILNLDEKEKMIKNTYVLKFWFKIAIEFNLIKPIRFLSKKFPHLDDWRLKTAVYLGNVDEIHHAYFQENIRLDPNDMMPLACMYPQNKLGIYYCFALGANINTALETLIRYINHEVNGEITFFSNYGIWSNVHFCISLGANPYTKKIQETLLRQEKNVIMKLLFRKGLLSPHSILHKKILEPSEVRKIISTYEYTETFHSFSLLRDNLR.

This sequence belongs to the asfivirus MGF 360 family.

Functionally, plays a role in virus cell tropism, and may be required for efficient virus replication in macrophages. The protein is Protein MGF 360-4L of Ornithodoros (relapsing fever ticks).